We begin with the raw amino-acid sequence, 40 residues long: Probable non-specific lipid-transfer protein (40 aa).

The protein belongs to the plant LTP family. In terms of processing, phosphorylated by Ca(2+)-dependent protein kinase.

In terms of biological role, plant non-specific lipid-transfer proteins transfer phospholipids as well as galactolipids across membranes. May play a role in wax or cutin deposition in the cell walls of expanding epidermal cells and certain secretory tissues. The polypeptide is Probable non-specific lipid-transfer protein (Triticum aestivum (Wheat)).